Consider the following 432-residue polypeptide: UDP-N-acetylglucosamine 1-carboxyvinyltransferase (432 aa).

Residue 22–23 (KN) participates in phosphoenolpyruvate binding. UDP-N-acetyl-alpha-D-glucosamine is bound at residue arginine 101. The active-site Proton donor is the cysteine 125. Cysteine 125 is modified (2-(S-cysteinyl)pyruvic acid O-phosphothioketal). UDP-N-acetyl-alpha-D-glucosamine is bound by residues 130–134 (RPVDL), aspartate 315, and isoleucine 337.

It belongs to the EPSP synthase family. MurA subfamily.

It is found in the cytoplasm. The catalysed reaction is phosphoenolpyruvate + UDP-N-acetyl-alpha-D-glucosamine = UDP-N-acetyl-3-O-(1-carboxyvinyl)-alpha-D-glucosamine + phosphate. The protein operates within cell wall biogenesis; peptidoglycan biosynthesis. Its function is as follows. Cell wall formation. Adds enolpyruvyl to UDP-N-acetylglucosamine. This is UDP-N-acetylglucosamine 1-carboxyvinyltransferase from Paramagnetospirillum magneticum (strain ATCC 700264 / AMB-1) (Magnetospirillum magneticum).